Here is a 65-residue protein sequence, read N- to C-terminus: MNSGNPCCDPVTCKPRRGEHCVSGPCCRNCKFLNAGTICKRARGDDMNDYCTGISPDCPRNPWKG.

Residues 1–65 (MNSGNPCCDP…PDCPRNPWKG (65 aa)) enclose the Disintegrin domain. 4 disulfides stabilise this stretch: Cys7-Cys30, Cys21-Cys27, Cys26-Cys51, and Cys39-Cys58. The Cell attachment site signature appears at 43–45 (RGD).

The protein belongs to the disintegrin family. Dimeric disintegrin subfamily. Homodimer; disulfide-linked. As to expression, expressed by the venom gland.

The protein localises to the secreted. In terms of biological role, poor inhibitor of platelet aggregation. The disintegrin inhibits the adhesion of cells expressing the RGD-dependent integrin alpha-5/beta-1 (ITGA5/ITGB1) to immobilized fibronectin. Inhibition on alpha-2b/beta-3 (ITGA2B/ITGB3) is low. This is Disintegrin VLO4 from Macrovipera lebetina obtusa (Levant blunt-nosed viper).